Here is a 226-residue protein sequence, read N- to C-terminus: DNA mismatch repair protein MutH (226 aa).

It belongs to the MutH family.

Its subcellular location is the cytoplasm. In terms of biological role, sequence-specific endonuclease that cleaves unmethylated GATC sequences. It is involved in DNA mismatch repair. The polypeptide is DNA mismatch repair protein MutH (Haemophilus ducreyi (strain 35000HP / ATCC 700724)).